We begin with the raw amino-acid sequence, 136 residues long: Large ribosomal subunit protein uL16c (136 aa).

It belongs to the universal ribosomal protein uL16 family. Part of the 50S ribosomal subunit.

The protein resides in the plastid. Its subcellular location is the chloroplast. The protein is Large ribosomal subunit protein uL16c of Guizotia abyssinica (Niger).